The primary structure comprises 843 residues: Leucine--tRNA ligase (843 aa).

The 'HIGH' region motif lies at 61–71 (PYPSGDLHMGH). The 'KMSKS' region signature appears at 606–610 (AMSKS). Lysine 609 is a binding site for ATP.

This sequence belongs to the class-I aminoacyl-tRNA synthetase family.

It localises to the cytoplasm. The enzyme catalyses tRNA(Leu) + L-leucine + ATP = L-leucyl-tRNA(Leu) + AMP + diphosphate. The chain is Leucine--tRNA ligase from Arthrobacter sp. (strain FB24).